A 120-amino-acid chain; its full sequence is Seripauperin-24 (120 aa).

The signal sequence occupies residues 1–20; it reads MVKLTSIAAGVAAIAATASA.

The protein belongs to the SRP1/TIP1 family. Seripauperin subfamily. In terms of processing, O-glycosylated.

The protein localises to the secreted. It localises to the cell wall. In terms of biological role, component of the cell wall. The polypeptide is Seripauperin-24 (PAU24) (Saccharomyces cerevisiae (strain ATCC 204508 / S288c) (Baker's yeast)).